The chain runs to 213 residues: dITP/XTP pyrophosphatase (213 aa).

Substrate is bound at residue 17–22 (SNNAGK). D78 serves as the catalytic Proton acceptor. Position 78 (D78) interacts with Mg(2+). Residues S79, 164 to 167 (FGYD), K187, and 192 to 193 (HR) each bind substrate.

The protein belongs to the HAM1 NTPase family. Homodimer. Requires Mg(2+) as cofactor.

It catalyses the reaction XTP + H2O = XMP + diphosphate + H(+). The catalysed reaction is dITP + H2O = dIMP + diphosphate + H(+). It carries out the reaction ITP + H2O = IMP + diphosphate + H(+). Pyrophosphatase that catalyzes the hydrolysis of nucleoside triphosphates to their monophosphate derivatives, with a high preference for the non-canonical purine nucleotides XTP (xanthosine triphosphate), dITP (deoxyinosine triphosphate) and ITP. Seems to function as a house-cleaning enzyme that removes non-canonical purine nucleotides from the nucleotide pool, thus preventing their incorporation into DNA/RNA and avoiding chromosomal lesions. The polypeptide is dITP/XTP pyrophosphatase (Bordetella parapertussis (strain 12822 / ATCC BAA-587 / NCTC 13253)).